The chain runs to 343 residues: Mesaconyl-CoA hydratase (343 aa).

The region spanning 47 to 116 (SDEFARACGL…STVIGLKENS (70 aa)) is the MaoC-like domain. Substrate is bound by residues 60–63 (PVDE), 83–86 (VANL), and 94–96 (LKP).

It carries out the reaction (2R,3S)-beta-methylmalyl-CoA = 2-methylfumaryl-CoA + H2O. Its function is as follows. Involved in the ethylmalonyl-CoA pathway for acetate assimilation. Catalyzes the reversible hydration of mesaconyl-CoA (2-methylfumaryl-CoA) to yield beta-methylmalyl-CoA ((2R,3S)-beta-methylmalyl-CoA). The chain is Mesaconyl-CoA hydratase (mch) from Cereibacter sphaeroides (strain ATCC 17023 / DSM 158 / JCM 6121 / CCUG 31486 / LMG 2827 / NBRC 12203 / NCIMB 8253 / ATH 2.4.1.) (Rhodobacter sphaeroides).